We begin with the raw amino-acid sequence, 130 residues long: Ribonuclease P protein component 2 (130 aa).

It belongs to the eukaryotic/archaeal RNase P protein component 2 family. In terms of assembly, consists of a catalytic RNA component and at least 4-5 protein subunits.

The protein resides in the cytoplasm. It catalyses the reaction Endonucleolytic cleavage of RNA, removing 5'-extranucleotides from tRNA precursor.. Its function is as follows. Part of ribonuclease P, a protein complex that generates mature tRNA molecules by cleaving their 5'-ends. This Methanococcus maripaludis (strain C6 / ATCC BAA-1332) protein is Ribonuclease P protein component 2.